A 406-amino-acid polypeptide reads, in one-letter code: LIM/homeobox protein Lhx1 (406 aa).

LIM zinc-binding domains follow at residues 4-54 and 63-117; these read CAGC…CKND and CAGC…CKED. 2 disordered regions span residues 128–189 and 294–372; these read NSLH…TIKA and DFFP…SAEV. The span at 137–148 shows a compositional bias: low complexity; the sequence is SDPSLSPDSQDP. Over residues 151-167 the composition is skewed to basic and acidic residues; sequence DDAKDSESANVSDKEGG. Phosphoserine is present on serine 162. The homeobox DNA-binding region spans 180–239; it reads RRGPRTTIKAKQLETLKAAFAATPKPTRHIREQLAQETGLNMRVIQVWFQNRRSKERRMK. A compositionally biased stretch (low complexity) spans 315 to 327; sequence PSSGPSGTPLGGL. Pro residues predominate over residues 352–362; that stretch reads GDSPSPEPSLP.

As to quaternary structure, interacts with LDB1 via the tandem LIM domains.

The protein localises to the nucleus. Potential transcription factor. May play a role in early mesoderm formation and later in lateral mesoderm differentiation and neurogenesis. In Mesocricetus auratus (Golden hamster), this protein is LIM/homeobox protein Lhx1 (Lhx1).